Reading from the N-terminus, the 2492-residue chain is Talin-A (2492 aa).

An FERM domain is found at 84–365; it reads RPQKFKLLDG…GYIEIIMKAR (282 aa). Residues 2250-2492 form the I/LWEQ domain; that stretch reads EEDNVLEDLE…NSRKQNYNKN (243 aa).

It is found in the cytoplasm. The protein localises to the cytoskeleton. It localises to the cell cortex. Its function is as follows. Actin-binding protein that may be involved in the control of cell motility and chemotaxis. The polypeptide is Talin-A (talA) (Dictyostelium discoideum (Social amoeba)).